A 376-amino-acid polypeptide reads, in one-letter code: N-acetyldiaminopimelate deacetylase (376 aa).

D69 is an active-site residue. The active-site Proton acceptor is the E128.

This sequence belongs to the peptidase M20A family. N-acetyldiaminopimelate deacetylase subfamily.

It catalyses the reaction N-acetyl-(2S,6S)-2,6-diaminopimelate + H2O = (2S,6S)-2,6-diaminopimelate + acetate. The protein operates within amino-acid biosynthesis; L-lysine biosynthesis via DAP pathway; LL-2,6-diaminopimelate from (S)-tetrahydrodipicolinate (acetylase route): step 3/3. Functionally, catalyzes the conversion of N-acetyl-diaminopimelate to diaminopimelate and acetate. In Streptococcus pneumoniae (strain 70585), this protein is N-acetyldiaminopimelate deacetylase.